We begin with the raw amino-acid sequence, 515 residues long: Alpha-1B adrenergic receptor (515 aa).

The Extracellular portion of the chain corresponds to 1–45 (MNPDLDTGHNTSAPAHWGELKDDNFTGPNQTSSNSTLPQLDVTRA). 3 N-linked (GlcNAc...) asparagine glycosylation sites follow: N10, N24, and N34. Residues 46-70 (ISVGLVLGAFILFAIVGNILVILSV) traverse the membrane as a helical segment. Residues 71–83 (ACNRHLRTPTNYF) are Cytoplasmic-facing. Residues 84–105 (IVNLAIADLLLSFTVLPFSATL) traverse the membrane as a helical segment. Residues 106–115 (EVLGYWVLGR) are Extracellular-facing. The chain crosses the membrane as a helical span at residues 116–141 (IFCDIWAAVDVLCCTASILSLCAISI). C118 and C195 are oxidised to a cystine. At 142–161 (DRYIGVRYSLQYPTLVTRRK) the chain is on the cytoplasmic side. The chain crosses the membrane as a helical span at residues 162–182 (AILALLSVWVLSTVISIGPLL). The Extracellular portion of the chain corresponds to 183 to 201 (GWKEPAPNDDKECGVTEEP). A helical transmembrane segment spans residues 202 to 224 (FYALFSSLGSFYIPLAVILVMYC). Topologically, residues 225–295 (RVYIVAKRTT…FSREKKAAKT (71 aa)) are cytoplasmic. At T264 the chain carries Phosphothreonine. Residues 296 to 319 (LGIVVGMFILCWLPFFIALPLGSL) form a helical membrane-spanning segment. Over 320 to 326 (FSTLKPP) the chain is Extracellular. A helical membrane pass occupies residues 327–351 (DAVFKVVFWLGYFNSCLNPIIYPCS). The Cytoplasmic segment spans residues 352 to 515 (SKEFKRAFMR…SNMPLAPGHF (164 aa)). A lipid anchor (S-palmitoyl cysteine) is attached at C365. The Nuclear localization signal signature appears at 368-378 (RGGRRRRRRRR). Disordered regions lie at residues 392–430 (GGSLERSQSRKDSLDDSGSCMSGTQRTLPSASPSPGYLG) and 474–515 (LGDP…PGHF). Polar residues-rich tracts occupy residues 410-424 (SCMSGTQRTLPSASP) and 484-498 (GDTSNGGCDTTTDLA).

The protein belongs to the G-protein coupled receptor 1 family. Adrenergic receptor subfamily. ADRA1B sub-subfamily. In terms of assembly, homo- and heterooligomer. Heterooligomerizes with ADRA1B homooligomers in cardiac myocytes. Interacts with CAVIN4.

It is found in the nucleus membrane. Its subcellular location is the cell membrane. The protein resides in the cytoplasm. The protein localises to the membrane. It localises to the caveola. Functionally, this alpha-adrenergic receptor mediates its action by association with G proteins that activate a phosphatidylinositol-calcium second messenger system. Its effect is mediated by G(q) and G(11) proteins. Nuclear ADRA1A-ADRA1B heterooligomers regulate phenylephrine (PE)-stimulated ERK signaling in cardiac myocytes. The chain is Alpha-1B adrenergic receptor (Adra1b) from Rattus norvegicus (Rat).